Reading from the N-terminus, the 279-residue chain is Dehydrogenase/reductase SDR family member 4 (279 aa).

37–61 (LVTASTDGIGLAIARRLAEDGAHVV) lines the NADP(+) pocket. Position 93 is an N6-acetyllysine; alternate (lysine 93). At lysine 93 the chain carries N6-succinyllysine; alternate. Lysine 106 bears the N6-acetyllysine mark. A substrate-binding site is contributed by serine 170. The Proton acceptor role is filled by tyrosine 183. Lysine 187 serves as a coordination point for NADP(+). At lysine 217 the chain carries N6-acetyllysine; alternate. Lysine 217 is subject to N6-succinyllysine; alternate. Serine 221 is subject to Phosphoserine. An N6-succinyllysine mark is found at lysine 228 and lysine 235. The short motif at 277–279 (SRL) is the Peroxisomal targeting signal element.

This sequence belongs to the short-chain dehydrogenases/reductases (SDR) family. As to quaternary structure, homotetramer.

The protein resides in the peroxisome. The enzyme catalyses a secondary alcohol + NADP(+) = a ketone + NADPH + H(+). The catalysed reaction is 3alpha-hydroxy-5beta-pregnan-20-one + NADP(+) = 5beta-pregnan-3,20-dione + NADPH + H(+). It catalyses the reaction 5beta-dihydrotestosterone + NADPH + H(+) = 5beta-androstane-3alpha,17beta-diol + NADP(+). It carries out the reaction all-trans-retinol + NADP(+) = all-trans-retinal + NADPH + H(+). The enzyme catalyses isatin + NADPH + H(+) = 3-hydroxyindolin-2-one + NADP(+). NADPH-dependent oxidoreductase which catalyzes the reduction of a variety of compounds bearing carbonyl groups including ketosteroids, alpha-dicarbonyl compounds, aldehydes, aromatic ketones and quinones. Reduces all-trans-retinal and 9-cis retinal. Reduces 3-ketosteroids and benzil into 3alpha-hydroxysteroids and S-benzoin, respectively, in contrast to the stereoselectivity of primates DHRS4s which produce 3beta-hydroxysteroids and R-benzoin. In the reverse reaction, catalyzes the NADP-dependent oxidation of 3alpha-hydroxysteroids and alcohol, but with much lower efficiency. Involved in the metabolism of 3alpha-hydroxysteroids, retinoid, isatin and xenobiotic carbonyl compounds. The sequence is that of Dehydrogenase/reductase SDR family member 4 (Dhrs4) from Rattus norvegicus (Rat).